The chain runs to 176 residues: Large ribosomal subunit protein uL10 (176 aa).

This sequence belongs to the universal ribosomal protein uL10 family. In terms of assembly, part of the ribosomal stalk of the 50S ribosomal subunit. The N-terminus interacts with L11 and the large rRNA to form the base of the stalk. The C-terminus forms an elongated spine to which L12 dimers bind in a sequential fashion forming a multimeric L10(L12)X complex.

In terms of biological role, forms part of the ribosomal stalk, playing a central role in the interaction of the ribosome with GTP-bound translation factors. This chain is Large ribosomal subunit protein uL10, found in Nocardia farcinica (strain IFM 10152).